The primary structure comprises 290 residues: MDIDAYFERIGYKNSRDKLDLETLTDILQHQIRAIPFENLNIHCGEAMELDLEVIFDQIVRRKRGGWCLQVNHLLYWALTMIGFETTILGGYVYNTFNDKYSSAMIHLLLKVTIDGRDYIADAGFGRSYQMWQPLELISGKYQPQTPCIFRLTEDRGTWYLDQIRREQYIPNQDFLDSDLLEKNEYRKIYSFTLEPRTIKDFESVNTYLQESPASVFTSKSFCSLQTPEGVHCLVGFTLTYRRFNYKDNTDLVEFKTLNEKEIEENLKNIFNISLEKKLTPKHGDKFFTI.

Residue methionine 1 is modified to N-acetylmethionine. CoA is bound at residue serine 103. Residue 106 to 107 (IH) coordinates substrate. Position 208 (tyrosine 208) interacts with CoA.

Belongs to the arylamine N-acetyltransferase family.

The protein resides in the cytoplasm. It catalyses the reaction an arylamine + acetyl-CoA = an N-acetylarylamine + CoA. Participates in the detoxification of a plethora of hydrazine and arylamine drugs. The protein is Arylamine N-acetyltransferase 1 (NAT1) of Bos taurus (Bovine).